A 348-amino-acid chain; its full sequence is Protein RecA (348 aa).

67 to 74 (GPESSGKT) serves as a coordination point for ATP.

Belongs to the RecA family.

It localises to the cytoplasm. Its function is as follows. Can catalyze the hydrolysis of ATP in the presence of single-stranded DNA, the ATP-dependent uptake of single-stranded DNA by duplex DNA, and the ATP-dependent hybridization of homologous single-stranded DNAs. It interacts with LexA causing its activation and leading to its autocatalytic cleavage. The protein is Protein RecA of Amycolatopsis mediterranei (strain U-32).